A 174-amino-acid chain; its full sequence is MLTLIQGKKIVNDLRSRLAFEYNGQLIKILSKNIIAVGSLRREEKMLNDVDLLIIVPEKKLLKHVLPNIRIKDFSFSVKVCGERKCVLFIEWKKNTYQLDLFTALAEEKPYAVLHFTGPVSYLIRIRAALKKKNYKLNQYGLFKNQTLVPLKITTEKELIKELGFTYRIPKKRL.

The tract at residues 42–51 is involved in ssDNA binding; that stretch reads REEKMLNDVD. The Mg(2+) site is built by Asp-49 and Asp-51. Residues Cys-81 and Cys-86 are joined by a disulfide bond. Mg(2+) is bound at residue Asp-100.

The protein belongs to the DNA polymerase type-X family. Mg(2+) is required as a cofactor.

Its subcellular location is the virion. It catalyses the reaction DNA(n) + a 2'-deoxyribonucleoside 5'-triphosphate = DNA(n+1) + diphosphate. In terms of biological role, error-prone polymerase lacking a proofreading 3'-5' exonuclease which catalyzes the gap-filling reaction during the DNA repair process. Specifically binds intermediates in the single-nucleotide base-excision repair process. Also catalyzes DNA polymerization with low nucleotide-insertion fidelity. Probably acts as a strategic DNA mutase, which gives rise to a rapid emergence of variants. Generates mismatched G-G pairs, in that case, the polymerase first binds the deoxynucleotide followed by mismatch formation. Together with the viral DNA ligase, fills the single nucleotide gaps generated by the AP endonuclease. Binds DNA with high affinity via the helix alphaE. This is Repair DNA polymerase X from African swine fever virus (isolate Tick/South Africa/Pretoriuskop Pr4/1996) (ASFV).